A 379-amino-acid polypeptide reads, in one-letter code: Alkanesulfonate monooxygenase (379 aa).

Belongs to the SsuD family.

It carries out the reaction an alkanesulfonate + FMNH2 + O2 = an aldehyde + FMN + sulfite + H2O + 2 H(+). Functionally, catalyzes the desulfonation of aliphatic sulfonates. The sequence is that of Alkanesulfonate monooxygenase from Sorangium cellulosum (strain So ce56) (Polyangium cellulosum (strain So ce56)).